Here is a 76-residue protein sequence, read N- to C-terminus: Small ribosomal subunit protein uS17 (76 aa).

The protein belongs to the universal ribosomal protein uS17 family. As to quaternary structure, part of the 30S ribosomal subunit.

One of the primary rRNA binding proteins, it binds specifically to the 5'-end of 16S ribosomal RNA. This is Small ribosomal subunit protein uS17 from Ruegeria sp. (strain TM1040) (Silicibacter sp.).